The following is a 450-amino-acid chain: 23S rRNA (uracil(1939)-C(5))-methyltransferase RlmD (450 aa).

The TRAM domain occupies 15–73 (KAVPAKNLTVTVASLDPFGQGVARHEGKTVFVTGVLPGEQAEVQLTEEKRQFSHAKLKR). The [4Fe-4S] cluster site is built by C86, C92, C95, and C173. The S-adenosyl-L-methionine site is built by Q276, F305, N310, E326, N353, and D374. C400 serves as the catalytic Nucleophile.

The protein belongs to the class I-like SAM-binding methyltransferase superfamily. RNA M5U methyltransferase family. RlmD subfamily.

The enzyme catalyses uridine(1939) in 23S rRNA + S-adenosyl-L-methionine = 5-methyluridine(1939) in 23S rRNA + S-adenosyl-L-homocysteine + H(+). Functionally, catalyzes the formation of 5-methyl-uridine at position 1939 (m5U1939) in 23S rRNA. The sequence is that of 23S rRNA (uracil(1939)-C(5))-methyltransferase RlmD from Pectobacterium atrosepticum (strain SCRI 1043 / ATCC BAA-672) (Erwinia carotovora subsp. atroseptica).